A 419-amino-acid polypeptide reads, in one-letter code: MQNSHLSQQRFSDLALHRSVQQAIKEKGFEFCTPIQALSLPITLKGQDIAGQAQTGTGKTIAFLTATFHHLLQKNNINSSEQPRALILAPTRELVVQIANDANFLVQATGLKTGLAYGGEGYDKQLKVIDQGIDILIGTTGRVIDYVKQGIIRLDYIQVVVLDEADRMFDLGFIRDIRYLLRKCPVPQQRLTMLFSATLSYKVRELAFEHMNDPQYVEIEPLQKTGHRIREELFYPSNQDKMALLMTLLEEEWPERCIIFSNTKHRCEEIWGYLSADGHRVGLLTGDVMQKKRLSLLKQFTDGTLDILVATDVAARGLHIPDVTHVFNYDLPDDCEDYVHRIGRTGRAGESGISISFACEEYAINLPAIEEYIGHSIPVSQYDAKALIEDLPTPHRIKRGAFDSRSNLQRTIKRLKKTY.

The short motif at 9 to 37 is the Q motif element; the sequence is QRFSDLALHRSVQQAIKEKGFEFCTPIQA. Residues 40–217 form the Helicase ATP-binding domain; it reads LPITLKGQDI…FEHMNDPQYV (178 aa). 53–60 contributes to the ATP binding site; the sequence is AQTGTGKT. Positions 163 to 166 match the DEAD box motif; sequence DEAD. Residues 241–388 enclose the Helicase C-terminal domain; sequence KMALLMTLLE…VSQYDAKALI (148 aa).

It belongs to the DEAD box helicase family. RhlB subfamily. In terms of assembly, component of the RNA degradosome, which is a multiprotein complex involved in RNA processing and mRNA degradation.

The protein localises to the cytoplasm. It carries out the reaction ATP + H2O = ADP + phosphate + H(+). Functionally, DEAD-box RNA helicase involved in RNA degradation. Has RNA-dependent ATPase activity and unwinds double-stranded RNA. The polypeptide is ATP-dependent RNA helicase RhlB (Histophilus somni (strain 129Pt) (Haemophilus somnus)).